A 366-amino-acid polypeptide reads, in one-letter code: 3-dehydroquinate synthase (366 aa).

NAD(+) is bound by residues 71–76 (DGEQYK), 105–109 (GVIGD), 129–130 (TT), Lys-142, Lys-151, and 169–172 (CLKT). Zn(2+) is bound by residues Glu-184, His-247, and His-264.

It belongs to the sugar phosphate cyclases superfamily. Dehydroquinate synthase family. The cofactor is Co(2+). It depends on Zn(2+) as a cofactor. NAD(+) is required as a cofactor.

It localises to the cytoplasm. The enzyme catalyses 7-phospho-2-dehydro-3-deoxy-D-arabino-heptonate = 3-dehydroquinate + phosphate. Its pathway is metabolic intermediate biosynthesis; chorismate biosynthesis; chorismate from D-erythrose 4-phosphate and phosphoenolpyruvate: step 2/7. Catalyzes the conversion of 3-deoxy-D-arabino-heptulosonate 7-phosphate (DAHP) to dehydroquinate (DHQ). This Serratia proteamaculans (strain 568) protein is 3-dehydroquinate synthase.